The chain runs to 291 residues: Elongation factor Ts (291 aa).

The interval Thr-80–Val-83 is involved in Mg(2+) ion dislocation from EF-Tu.

It belongs to the EF-Ts family.

The protein localises to the cytoplasm. In terms of biological role, associates with the EF-Tu.GDP complex and induces the exchange of GDP to GTP. It remains bound to the aminoacyl-tRNA.EF-Tu.GTP complex up to the GTP hydrolysis stage on the ribosome. The polypeptide is Elongation factor Ts (Acinetobacter baylyi (strain ATCC 33305 / BD413 / ADP1)).